We begin with the raw amino-acid sequence, 451 residues long: Heme sensor protein HssS (451 aa).

Transmembrane regions (helical) follow at residues 9-29 and 164-184; these read IAIY…LFTN and IFLA…VIAS. The HAMP domain maps to 186–238; that stretch reads YSIIKPVTALKNATTRIMKGDFSTPIKQTRHDEIGTLQSRFNTMRQNLGQVDQ. A Histidine kinase domain is found at 246–451; sequence NVSHEIKTPL…KTQFIVKLFI (206 aa). Residue His249 is modified to Phosphohistidine; by autocatalysis.

Post-translationally, autophosphorylated.

It is found in the cell membrane. The enzyme catalyses ATP + protein L-histidine = ADP + protein N-phospho-L-histidine.. Member of the two-component regulatory system HssS/HssR involved in intracellular heme homeostasis and tempering of staphylococcal virulence. HssS functions as a heme sensor histidine kinase which is autophosphorylated at a histidine residue and transfers its phosphate group to an aspartate residue of HssR. HssR/HssS activates the expression of HrtAB, an efflux pump, in response to extracellular heme, hemin, hemoglobin or blood. The polypeptide is Heme sensor protein HssS (hssS) (Staphylococcus epidermidis (strain ATCC 12228 / FDA PCI 1200)).